A 401-amino-acid chain; its full sequence is cAMP-dependent protein kinase type II-alpha regulatory subunit (401 aa).

Ser2 carries the post-translational modification N-acetylserine. Residues Ser2 to Leu135 form a dimerization and phosphorylation region. Phosphoserine occurs at positions 47, 74, 76, and 96. The segment at Glu61–Leu83 is disordered. Positions Ile68–Leu83 are enriched in acidic residues. 3',5'-cyclic AMP-binding positions include Leu136–Pro257, Glu205, Arg214, Leu258–Gln401, Glu335, and Arg344. At Thr212 the chain carries Phosphothreonine; by PDPK1. Phosphoserine is present on residues Ser347 and Ser392.

It belongs to the cAMP-dependent kinase regulatory chain family. In terms of assembly, the inactive form of the enzyme is composed of two regulatory chains and two catalytic chains. Activation by cAMP produces two active catalytic monomers and a regulatory dimer that binds four cAMP molecules. Interacts with AKAP4. Interacts with CBFA2T3. Interacts with the phosphorylated form of PJA2. Interacts with MYRIP. This interaction may link PKA to components of the exocytosis machinery, thus facilitating exocytosis, including insulin release. Forms a complex composed of PRKAR2A, GSK3B and GSKIP through GSKIP interaction; facilitates PKA-induced phosphorylation and regulates GSK3B activity. Interacts with ADCY8; inhibits adenylate cyclase activity through PKA phosphorylation. Post-translationally, phosphorylated by the activated catalytic chain. Four types of regulatory chains are found: I-alpha, I-beta, II-alpha, and II-beta. Their expression varies among tissues and is in some cases constitutive and in others inducible.

The protein resides in the cytoplasm. It is found in the cell membrane. Functionally, regulatory subunit of the cAMP-dependent protein kinases involved in cAMP signaling in cells. Type II regulatory chains mediate membrane association by binding to anchoring proteins, including the MAP2 kinase. This Mus musculus (Mouse) protein is cAMP-dependent protein kinase type II-alpha regulatory subunit (Prkar2a).